The primary structure comprises 447 residues: MEKELKVRTKLLTKEYSLAQTRIDKLKTLFSVFQNKVPTFWALKGVSLDVYSGETIGIIGLNGSGKSTLSNIISGITPQTSGELEINGEVSIISIGAGLNNNLTGRENIRMKCLMLGEKNKEIDAKIDDIIEFSELGVFIDQPVKTYSSGMRAKLGFSIAVHQNPDILVIDEALSVGDQTFYNKGLKKMLAFKEQGKTIFFVSHSIQQVEQICDRVAWMHYGDLRAFGETKHILKEYRAFLHRYNHFTEPQKESYQRDGKAKQRNFSLEQLQETILEKANQQVGSRRTTKEVIKFTTKNKIGDKMTLGTKSLLILLLCMIFYVSLTFVKGISLTTAFIHPAETIQRIFVPEKVAGKDTNAVKTTKTKPASTKESRQQEEVQPSPTNVPENNNSEQAVSTYTVEVGDSVSLIAENHGLTIEQLQTLNPEIIEVPIYPGQVLKLKEVTE.

The ABC transporter domain occupies 24 to 246 (DKLKTLFSVF…YRAFLHRYNH (223 aa)). 60-67 (GLNGSGKS) serves as a coordination point for ATP. The unknown stretch occupies residues 247–447 (FTEPQKESYQ…QVLKLKEVTE (201 aa)). Residues 359–393 (NAVKTTKTKPASTKESRQQEEVQPSPTNVPENNNS) are disordered. 2 stretches are compositionally biased toward polar residues: residues 360-369 (AVKTTKTKPA) and 379-393 (EVQPSPTNVPENNNS). Positions 398–442 (STYTVEVGDSVSLIAENHGLTIEQLQTLNPEIIEVPIYPGQVLKL) constitute a LysM domain.

Belongs to the ABC transporter superfamily. Teichoic acids exporter (TC 3.A.1.104.1) family. As to quaternary structure, the complex is composed of two ATP-binding proteins (TagH) and two transmembrane proteins (TagG).

The protein resides in the cell membrane. The catalysed reaction is ATP + H2O + teichoic acidSide 1 = ADP + phosphate + teichoic acidSide 2.. Its function is as follows. Part of the ABC transporter complex TagGH involved in teichoic acids export. Responsible for energy coupling to the transport system. This Enterococcus faecalis (strain ATCC 700802 / V583) protein is Teichoic acids export ATP-binding protein TagH.